A 335-amino-acid chain; its full sequence is Ferrochelatase (335 aa).

Residues His194 and Glu275 each coordinate Fe cation.

It belongs to the ferrochelatase family.

Its subcellular location is the cytoplasm. It catalyses the reaction heme b + 2 H(+) = protoporphyrin IX + Fe(2+). It functions in the pathway porphyrin-containing compound metabolism; protoheme biosynthesis; protoheme from protoporphyrin-IX: step 1/1. In terms of biological role, catalyzes the ferrous insertion into protoporphyrin IX. The polypeptide is Ferrochelatase (Sodalis glossinidius (strain morsitans)).